A 591-amino-acid polypeptide reads, in one-letter code: 2-succinyl-5-enolpyruvyl-6-hydroxy-3-cyclohexene-1-carboxylate synthase (591 aa).

It belongs to the TPP enzyme family. MenD subfamily. Homodimer. It depends on Mg(2+) as a cofactor. Requires Mn(2+) as cofactor. The cofactor is thiamine diphosphate.

The enzyme catalyses isochorismate + 2-oxoglutarate + H(+) = 5-enolpyruvoyl-6-hydroxy-2-succinyl-cyclohex-3-ene-1-carboxylate + CO2. It functions in the pathway quinol/quinone metabolism; 1,4-dihydroxy-2-naphthoate biosynthesis; 1,4-dihydroxy-2-naphthoate from chorismate: step 2/7. Its pathway is quinol/quinone metabolism; menaquinone biosynthesis. Catalyzes the thiamine diphosphate-dependent decarboxylation of 2-oxoglutarate and the subsequent addition of the resulting succinic semialdehyde-thiamine pyrophosphate anion to isochorismate to yield 2-succinyl-5-enolpyruvyl-6-hydroxy-3-cyclohexene-1-carboxylate (SEPHCHC). The sequence is that of 2-succinyl-5-enolpyruvyl-6-hydroxy-3-cyclohexene-1-carboxylate synthase from Salinibacter ruber (strain DSM 13855 / M31).